Here is a 256-residue protein sequence, read N- to C-terminus: uncharacterized protein (256 aa).

The signal sequence occupies residues 1 to 24 (MIKRVNKLVLGISLLFLVISITAG). C25 is lipidated: N-palmitoyl cysteine. The S-diacylglycerol cysteine moiety is linked to residue C25.

It belongs to the staphylococcal tandem lipoprotein family.

It is found in the cell membrane. This is an uncharacterized protein from Staphylococcus aureus.